A 197-amino-acid chain; its full sequence is MSSKEQKTPDGQAPEEIVTEQHEEVESVESAESAEQVDPRDEEIARLQSELTQAQNRERDTVLRMKAEMENLRRRTEQDIEKAHKFALEKFINELLPVIDSLDRALEVANKENQDMAAMVEGIELTLKSMLDVVRKFGVEVIADTNVPLDPNVHQAIAMVESEDVAPNHVLAVMQKGYTLNGRTIRAAMVTVAKAKA.

The interval 1-43 (MSSKEQKTPDGQAPEEIVTEQHEEVESVESAESAEQVDPRDEE) is disordered.

The protein belongs to the GrpE family. Homodimer.

The protein localises to the cytoplasm. In terms of biological role, participates actively in the response to hyperosmotic and heat shock by preventing the aggregation of stress-denatured proteins, in association with DnaK and GrpE. It is the nucleotide exchange factor for DnaK and may function as a thermosensor. Unfolded proteins bind initially to DnaJ; upon interaction with the DnaJ-bound protein, DnaK hydrolyzes its bound ATP, resulting in the formation of a stable complex. GrpE releases ADP from DnaK; ATP binding to DnaK triggers the release of the substrate protein, thus completing the reaction cycle. Several rounds of ATP-dependent interactions between DnaJ, DnaK and GrpE are required for fully efficient folding. The protein is Protein GrpE of Cronobacter sakazakii (strain ATCC BAA-894) (Enterobacter sakazakii).